The primary structure comprises 562 residues: Dihydroxy-acid dehydratase (562 aa).

Aspartate 78 serves as a coordination point for Mg(2+). Cysteine 119 contributes to the [2Fe-2S] cluster binding site. Residues aspartate 120 and lysine 121 each coordinate Mg(2+). Lysine 121 is modified (N6-carboxylysine). Cysteine 192 is a [2Fe-2S] cluster binding site. Glutamate 449 is a binding site for Mg(2+). Serine 475 acts as the Proton acceptor in catalysis.

This sequence belongs to the IlvD/Edd family. As to quaternary structure, homodimer. The cofactor is [2Fe-2S] cluster. Requires Mg(2+) as cofactor.

It catalyses the reaction (2R)-2,3-dihydroxy-3-methylbutanoate = 3-methyl-2-oxobutanoate + H2O. The catalysed reaction is (2R,3R)-2,3-dihydroxy-3-methylpentanoate = (S)-3-methyl-2-oxopentanoate + H2O. It functions in the pathway amino-acid biosynthesis; L-isoleucine biosynthesis; L-isoleucine from 2-oxobutanoate: step 3/4. The protein operates within amino-acid biosynthesis; L-valine biosynthesis; L-valine from pyruvate: step 3/4. In terms of biological role, functions in the biosynthesis of branched-chain amino acids. Catalyzes the dehydration of (2R,3R)-2,3-dihydroxy-3-methylpentanoate (2,3-dihydroxy-3-methylvalerate) into 2-oxo-3-methylpentanoate (2-oxo-3-methylvalerate) and of (2R)-2,3-dihydroxy-3-methylbutanoate (2,3-dihydroxyisovalerate) into 2-oxo-3-methylbutanoate (2-oxoisovalerate), the penultimate precursor to L-isoleucine and L-valine, respectively. The sequence is that of Dihydroxy-acid dehydratase from Aliarcobacter butzleri (strain RM4018) (Arcobacter butzleri).